The sequence spans 583 residues: Putative rhophilin-2-like protein RHPN2P1 (583 aa).

One can recognise a BRO1 domain in the interval Pro-26–Asp-375. The 79-residue stretch at Arg-412 to Leu-490 folds into the PDZ domain.

The protein is Putative rhophilin-2-like protein RHPN2P1 (RHPN2P1) of Homo sapiens (Human).